A 406-amino-acid polypeptide reads, in one-letter code: Protein PHYTOCHROME KINASE SUBSTRATE 4 (406 aa).

The segment covering 106–119 (SWNSQTGLLSNKNR) has biased composition (polar residues). Positions 106-133 (SWNSQTGLLSNKNRQGSDRDGRRSSKKG) are disordered.

It belongs to the PKS family. In terms of assembly, interacts in vitro with PHYA and PHYB. In terms of tissue distribution, expressed in the hypocotyl elongation zone. Not found in the root elongation zone.

Its function is as follows. Modulates phytochrome-mediated control of hypocotyl growth orientation. Involved in PHYA and PHYB signaling. Acts as an inhibitor of asymmetric growth. Not involved in the control of leaf flattening. This chain is Protein PHYTOCHROME KINASE SUBSTRATE 4 (PKS4), found in Arabidopsis thaliana (Mouse-ear cress).